The chain runs to 50 residues: MEYRYYCHSSFRFLKGGDGETGRWQGQFATLDSFSHYRLSLSLLAACSRW.

This is an uncharacterized protein from His1 virus (isolate Australia/Victoria) (His1V).